We begin with the raw amino-acid sequence, 248 residues long: 2,3-bisphosphoglycerate-dependent phosphoglycerate mutase (248 aa).

Substrate-binding positions include 8–15, 21–22, R60, 87–90, K98, 114–115, and 183–184; these read RHGESEWN, TG, ERHY, RR, and GN. The active-site Tele-phosphohistidine intermediate is the H9. Residue E87 is the Proton donor/acceptor of the active site.

The protein belongs to the phosphoglycerate mutase family. BPG-dependent PGAM subfamily.

The catalysed reaction is (2R)-2-phosphoglycerate = (2R)-3-phosphoglycerate. The protein operates within carbohydrate degradation; glycolysis; pyruvate from D-glyceraldehyde 3-phosphate: step 3/5. Catalyzes the interconversion of 2-phosphoglycerate and 3-phosphoglycerate. In Borrelia hermsii (strain HS1 / DAH), this protein is 2,3-bisphosphoglycerate-dependent phosphoglycerate mutase.